The primary structure comprises 1034 residues: MGKAENYELYQVELGPGPSGDMAAKMSKKKAGRGGGKRKEKLENMKKEMEINDHQLSVAELEQKYQTSATKGLSASLAAELLLRDGPNALRPPRGTPEYVKFARQLAGGLQCLMWVAAAICLIAFAIQASEGDLTTDDNLYLALALIAVVVVTGCFGYYQEFKSTNIIASFKNLVPQQATVIRDGDKFQINADQLVVGDLVEMKGGDRVPADIRILQAQGRKVDNSSLTGESEPQTRSPECTHESPLETRNIAFFSTMCLEGTAQGLVVNTGDRTIIGRIASLASGVENEKTPIAIEIEHFVDIIAGLAILFGATFFIVAMCIGYTFLRAMVFFMAIVVAYVPEGLLATVTVCLSLTAKRLASKNCVVKNLEAVETLGSTSVICSDKTGTLTQNRMTVSHLWFDNHIHSADTTEDQSGQTFDQSSETWRALCRVLTLCNRAAFKSGQDAVPVPKRIVIGDASETALLKFSELTLGNAMGYRERFPKVCEIPFNSTNKFQLSIHTLEDPRDPRHVLVMKGAPERVLERCSSILIKGQELPLDEQWREAFQTAYLSLGGLGERVLGFCQLYLSEKDYPPGYAFDVEAMNFPTSGLSFAGLVSMIDPPRATVPDAVLKCRTAGIRVIMVTGDHPITAKAIAASVGIISEGSETVEDIAARLRVPVDQVNRKDARACVINGMQLKDMDPSELVEALRTHPEMVFARTSPQQKLVIVESCQRLGAIVAVTGDGVNDSPALKKADIGVAMGIAGSDAAKNAADMILLDDNFASIVTGVEQGRLIFDNLKKSIAYTLTKNIPELTPYLIYITVSVPLPLGCITILFIELCTDIFPSVSLAYEKAESDIMHLRPRNPKRDRLVNEPLAAYSYFQIGAIQSFAGFTDYFTAMAQEGWFPLLCVGLRPQWENHHLQDLQDSYGQEWTFGQRLYQQYTCYTVFFISIEMCQIADVLIRKTRRLSAFQQGFFRNRILVIAIVFQVCIGCFLCYCPGMPNIFNFMPIRFQWWLVPMPFGLLIFVYDEIRKLGVRCCPGSWWDQELYY.

Over 2–97 (GKAENYELYQ…NALRPPRGTP (96 aa)) the chain is Cytoplasmic. Phosphotyrosine is present on residues tyrosine 7 and tyrosine 10. The interval 13–40 (ELGPGPSGDMAAKMSKKKAGRGGGKRKE) is disordered. Positions 26–39 (MSKKKAGRGGGKRK) are enriched in basic residues. Phosphoserine; by PKA and PKC is present on serine 27. A helical transmembrane segment spans residues 98-118 (EYVKFARQLAGGLQCLMWVAA). The Lumenal segment spans residues 119–141 (AICLIAFAIQASEGDLTTDDNLY). Residues 142-162 (LALALIAVVVVTGCFGYYQEF) traverse the membrane as a helical segment. The Cytoplasmic segment spans residues 163-298 (KSTNIIASFK…NEKTPIAIEI (136 aa)). Residues 222–244 (KVDNSSLTGESEPQTRSPECTHE) are disordered. Residues 225–239 (NSSLTGESEPQTRSP) show a composition bias toward polar residues. The chain crosses the membrane as a helical span at residues 299–318 (EHFVDIIAGLAILFGATFFI). Residues 319–330 (VAMCIGYTFLRA) are Lumenal-facing. A helical transmembrane segment spans residues 331–348 (MVFFMAIVVAYVPEGLLA). 4 residues coordinate K(+): valine 339, alanine 340, valine 342, and glutamate 344. At 349-782 (TVTVCLSLTA…EQGRLIFDNL (434 aa)) the chain is on the cytoplasmic side. The active-site 4-aspartylphosphate intermediate is aspartate 386. Residues aspartate 386 and threonine 388 each contribute to the Mg(2+) site. 2 positions are modified to phosphoserine: serine 462 and serine 600. Mg(2+)-binding residues include aspartate 727 and aspartate 731. A helical transmembrane segment spans residues 783–802 (KKSIAYTLTKNIPELTPYLI). Glutamate 796 lines the K(+) pocket. Residues 803-812 (YITVSVPLPL) are Lumenal-facing. The chain crosses the membrane as a helical span at residues 813 to 833 (GCITILFIELCTDIFPSVSLA). Glutamate 821 provides a ligand contact to K(+). Residues 834 to 853 (YEKAESDIMHLRPRNPKRDR) lie on the Cytoplasmic side of the membrane. Serine 839 carries the phosphoserine modification. The chain crosses the membrane as a helical span at residues 854 to 876 (LVNEPLAAYSYFQIGAIQSFAGF). Residues 877 to 928 (TDYFTAMAQEGWFPLLCVGLRPQWENHHLQDLQDSYGQEWTFGQRLYQQYTC) lie on the Lumenal side of the membrane. A helical transmembrane segment spans residues 929-948 (YTVFFISIEMCQIADVLIRK). At 949–962 (TRRLSAFQQGFFRN) the chain is on the cytoplasmic side. Serine 953 bears the Phosphoserine; by PKA mark. The helical transmembrane segment at 963-981 (RILVIAIVFQVCIGCFLCY) threads the bilayer. Residues 982-996 (CPGMPNIFNFMPIRF) are Lumenal-facing. The chain crosses the membrane as a helical span at residues 997–1017 (QWWLVPMPFGLLIFVYDEIRK). Residues 1018–1034 (LGVRCCPGSWWDQELYY) lie on the Cytoplasmic side of the membrane.

It belongs to the cation transport ATPase (P-type) (TC 3.A.3) family. Type IIC subfamily. The gastric H(+)/K(+) ATPase pump is composed of the catalytic alpha subunit ATP4A and the regulatory beta subunit ATP4B. Interacts (via the P-domain) with ATP4B (via N-terminus); this interaction stabilizes the lumenal-open E2 conformation state and prevents the reverse reaction of the transport cycle.

The protein resides in the apical cell membrane. It is found in the cell membrane. It carries out the reaction K(+)(out) + ATP + H2O + H(+)(in) = K(+)(in) + ADP + phosphate + 2 H(+)(out). Its activity is regulated as follows. Down-regulated by K(+)-competitive acid blockers (P-CABs) such as vonoprazan. Functionally, the catalytic subunit of the gastric H(+)/K(+) ATPase pump which transports H(+) ions in exchange for K(+) ions across the apical membrane of parietal cells. Uses ATP as an energy source to pump H(+) ions to the gastric lumen while transporting K(+) ion from the lumen into the cell. Remarkably generates a million-fold proton gradient across the gastric parietal cell membrane, acidifying the gastric juice down to pH 1. Within a transport cycle, the transfer of a H(+) ion across the membrane is coupled to ATP hydrolysis and is associated with a transient phosphorylation that shifts the pump conformation from inward-facing (E1) to outward-facing state (E2). The release of the H(+) ion in the stomach lumen is followed by binding of K(+) ion converting the pump conformation back to the E1 state. The sequence is that of Potassium-transporting ATPase alpha chain 1 (ATP4A) from Sus scrofa (Pig).